Here is a 250-residue protein sequence, read N- to C-terminus: MSQAAETLDGWYSLHLFYAVDWASLRIVPKDERDALVTEFQSFLENTATVRSSKSGDQAIYNITGQKADLLLWFLRPEMKSLNHIENEFNKLRIADFLIPTYSYVSVIELSNYLAGKSDEDPYENPHIKARLYPELPHSDYICFYPMNKRRNETYNWYMLTMEERQKLMYDHGMIGRKYAGKIKQFITGSVGFDDFEWGVTLFSDDVLQFKKIVYEMRFDETTARYGEFGSFFVGHLINTNEFDQFFAIS.

Residues Arg-131, 145-149 (YPMNK), His-172, and Gln-185 contribute to the Fe-coproporphyrin III site. Residue Tyr-145 is part of the active site.

The protein belongs to the ChdC family. Type 1 subfamily. It depends on Fe-coproporphyrin III as a cofactor.

It carries out the reaction Fe-coproporphyrin III + 2 H2O2 + 2 H(+) = heme b + 2 CO2 + 4 H2O. The catalysed reaction is Fe-coproporphyrin III + H2O2 + H(+) = harderoheme III + CO2 + 2 H2O. It catalyses the reaction harderoheme III + H2O2 + H(+) = heme b + CO2 + 2 H2O. It functions in the pathway porphyrin-containing compound metabolism; protoheme biosynthesis. Involved in coproporphyrin-dependent heme b biosynthesis. Catalyzes the decarboxylation of Fe-coproporphyrin III (coproheme) to heme b (protoheme IX), the last step of the pathway. The reaction occurs in a stepwise manner with a three-propionate intermediate. The chain is Coproheme decarboxylase from Staphylococcus aureus (strain Mu50 / ATCC 700699).